We begin with the raw amino-acid sequence, 64 residues long: Prokaryotic ubiquitin-like protein Pup (64 aa).

The segment at 1-37 (MAQEQTQRAGGGEDDETTGGDGSAGQERREKLAAETD) is disordered. The segment at 21 to 58 (DGSAGQERREKLAAETDDLLDEIDDVLEENAEDFVRAY) is ARC ATPase binding. Residues 24 to 52 (AGQERREKLAAETDDLLDEIDDVLEENAE) adopt a coiled-coil conformation. Residue Gln-64 is modified to Deamidated glutamine. Gln-64 is covalently cross-linked (Isoglutamyl lysine isopeptide (Gln-Lys) (interchain with K-? in acceptor proteins)).

This sequence belongs to the prokaryotic ubiquitin-like protein family. In terms of assembly, strongly interacts with the proteasome-associated ATPase ARC through a hydrophobic interface; the interacting region of Pup lies in its C-terminal half. There is one Pup binding site per ARC hexamer ring. Is modified by deamidation of its C-terminal glutamine to glutamate by the deamidase Dop, a prerequisite to the subsequent pupylation process.

Its pathway is protein degradation; proteasomal Pup-dependent pathway. Protein modifier that is covalently attached to lysine residues of substrate proteins, thereby targeting them for proteasomal degradation. The tagging system is termed pupylation. The polypeptide is Prokaryotic ubiquitin-like protein Pup (Rhodococcus erythropolis (strain PR4 / NBRC 100887)).